Here is a 469-residue protein sequence, read N- to C-terminus: Bifunctional protein GlmU (469 aa).

The pyrophosphorylase stretch occupies residues 1 to 237; sequence MTTNRKFAIA…SHEVLGVNTR (237 aa). UDP-N-acetyl-alpha-D-glucosamine-binding positions include 12-15, Lys-26, Gln-78, 83-84, 105-107, Gly-144, Glu-162, Asn-177, and Asn-235; these read LAAG, GT, and SGD. Residue Asp-107 participates in Mg(2+) binding. Residue Asn-235 participates in Mg(2+) binding. Residues 238-258 form a linker region; it reads QDLASLDAHLRLQKCQQLMSA. The interval 259-469 is N-acetyltransferase; it reads GVSIFKPETC…KKRAEQKKKK (211 aa). UDP-N-acetyl-alpha-D-glucosamine-binding residues include Arg-341 and Lys-359. The Proton acceptor role is filled by His-371. The UDP-N-acetyl-alpha-D-glucosamine site is built by Tyr-374 and Asn-385. Residues Ala-388, 394–395, Ser-413, Ala-431, and Arg-448 contribute to the acetyl-CoA site; that span reads NY.

The protein in the N-terminal section; belongs to the N-acetylglucosamine-1-phosphate uridyltransferase family. In the C-terminal section; belongs to the transferase hexapeptide repeat family. As to quaternary structure, homotrimer. Requires Mg(2+) as cofactor.

The protein localises to the cytoplasm. It catalyses the reaction alpha-D-glucosamine 1-phosphate + acetyl-CoA = N-acetyl-alpha-D-glucosamine 1-phosphate + CoA + H(+). It carries out the reaction N-acetyl-alpha-D-glucosamine 1-phosphate + UTP + H(+) = UDP-N-acetyl-alpha-D-glucosamine + diphosphate. The protein operates within nucleotide-sugar biosynthesis; UDP-N-acetyl-alpha-D-glucosamine biosynthesis; N-acetyl-alpha-D-glucosamine 1-phosphate from alpha-D-glucosamine 6-phosphate (route II): step 2/2. It functions in the pathway nucleotide-sugar biosynthesis; UDP-N-acetyl-alpha-D-glucosamine biosynthesis; UDP-N-acetyl-alpha-D-glucosamine from N-acetyl-alpha-D-glucosamine 1-phosphate: step 1/1. Its pathway is bacterial outer membrane biogenesis; LPS lipid A biosynthesis. Its function is as follows. Catalyzes the last two sequential reactions in the de novo biosynthetic pathway for UDP-N-acetylglucosamine (UDP-GlcNAc). The C-terminal domain catalyzes the transfer of acetyl group from acetyl coenzyme A to glucosamine-1-phosphate (GlcN-1-P) to produce N-acetylglucosamine-1-phosphate (GlcNAc-1-P), which is converted into UDP-GlcNAc by the transfer of uridine 5-monophosphate (from uridine 5-triphosphate), a reaction catalyzed by the N-terminal domain. The sequence is that of Bifunctional protein GlmU from Koribacter versatilis (strain Ellin345).